The primary structure comprises 164 residues: Serine/arginine-rich splicing factor 3 (164 aa).

Residue Met1 is modified to N-acetylmethionine. Positions 1-90 (MHRDSCPLDC…SNGEKRSRNR (90 aa)) are sufficient for interaction with NXF1 and SRSP. A Phosphoserine modification is found at Ser5. The RRM domain maps to 10–83 (CKVYVGNLGN…CRVRVELSNG (74 aa)). Lys23 is modified (N6-acetyllysine). The disordered stretch occupies residues 81 to 164 (SNGEKRSRNR…RSRSRSNERK (84 aa)). A compositionally biased stretch (basic residues) spans 107-128 (RSPPPRRRSPRRRSFSRSRSRS). The stretch at 119-133 (RSFSRSRSRSLSRDR) is one B-1 repeat. The segment at 119–164 (RSFSRSRSRSLSRDRRRERSLSRERNHKPSRSFSRSRSRSRSNERK) is 2 X approximate repeats, basic. The segment covering 129–142 (LSRDRRRERSLSRE) has biased composition (basic and acidic residues). A compositionally biased stretch (basic residues) spans 143 to 158 (RNHKPSRSFSRSRSRS). The B-2 repeat unit spans residues 149-164 (RSFSRSRSRSRSNERK).

Belongs to the splicing factor SR family. Interacts with CPSF6. Interacts with RBMY1A1. Interacts with SREK1/SFRS12. Interacts with NXF1. Interacts with YTHDC1, leading to recruitment to RNA elements adjacent to m6A sites. Interacts with SRSP; increases SRSF3 binding to specific exons. Post-translationally, phosphorylated by CLK1, CLK2, CLK3 and CLK4. Extensively phosphorylated on serine residues in the RS domain.

It is found in the nucleus. Its subcellular location is the nucleus speckle. The protein localises to the cytoplasm. Functionally, splicing factor, which binds the consensus motif 5'-C[ACU][AU]C[ACU][AC]C-3' within pre-mRNA and promotes specific exons inclusion during alternative splicing. Interaction with YTHDC1, a RNA-binding protein that recognizes and binds N6-methyladenosine (m6A)-containing RNAs, promotes recruitment of SRSF3 to its mRNA-binding elements adjacent to m6A sites within exons. Also functions as an adapter involved in mRNA nuclear export. Binds mRNA which is thought to be transferred to the NXF1-NXT1 heterodimer for export (TAP/NXF1 pathway); enhances NXF1-NXT1 RNA-binding activity. Involved in nuclear export of m6A-containing mRNAs via interaction with YTHDC1: interaction with YTHDC1 facilitates m6A-containing mRNA-binding to both SRSF3 and NXF1, promoting mRNA nuclear export. The polypeptide is Serine/arginine-rich splicing factor 3 (SRSF3) (Bos taurus (Bovine)).